The sequence spans 193 residues: Peptidyl-tRNA hydrolase (193 aa).

TRNA is bound at residue Tyr16. Catalysis depends on His21, which acts as the Proton acceptor. Residues Phe66, Asn68, and Asn114 each contribute to the tRNA site.

This sequence belongs to the PTH family. Monomer.

The protein resides in the cytoplasm. It catalyses the reaction an N-acyl-L-alpha-aminoacyl-tRNA + H2O = an N-acyl-L-amino acid + a tRNA + H(+). Functionally, hydrolyzes ribosome-free peptidyl-tRNAs (with 1 or more amino acids incorporated), which drop off the ribosome during protein synthesis, or as a result of ribosome stalling. In terms of biological role, catalyzes the release of premature peptidyl moieties from peptidyl-tRNA molecules trapped in stalled 50S ribosomal subunits, and thus maintains levels of free tRNAs and 50S ribosomes. This is Peptidyl-tRNA hydrolase from Trichlorobacter lovleyi (strain ATCC BAA-1151 / DSM 17278 / SZ) (Geobacter lovleyi).